A 333-amino-acid polypeptide reads, in one-letter code: Biotin synthase (333 aa).

Residues 46–275 form the Radical SAM core domain; that stretch reads YYGKKVKLNM…TKEIRISGGR (230 aa). Cys64, Cys68, and Cys71 together coordinate [4Fe-4S] cluster. [2Fe-2S] cluster contacts are provided by Cys108, Cys140, Cys200, and Arg270.

Belongs to the radical SAM superfamily. Biotin synthase family. In terms of assembly, homodimer. [4Fe-4S] cluster serves as cofactor. It depends on [2Fe-2S] cluster as a cofactor.

The catalysed reaction is (4R,5S)-dethiobiotin + (sulfur carrier)-SH + 2 reduced [2Fe-2S]-[ferredoxin] + 2 S-adenosyl-L-methionine = (sulfur carrier)-H + biotin + 2 5'-deoxyadenosine + 2 L-methionine + 2 oxidized [2Fe-2S]-[ferredoxin]. It participates in cofactor biosynthesis; biotin biosynthesis; biotin from 7,8-diaminononanoate: step 2/2. Functionally, catalyzes the conversion of dethiobiotin (DTB) to biotin by the insertion of a sulfur atom into dethiobiotin via a radical-based mechanism. This chain is Biotin synthase, found in Halalkalibacterium halodurans (strain ATCC BAA-125 / DSM 18197 / FERM 7344 / JCM 9153 / C-125) (Bacillus halodurans).